Here is an 81-residue protein sequence, read N- to C-terminus: Photosystem I iron-sulfur center (81 aa).

2 consecutive 4Fe-4S ferredoxin-type domains span residues Ser-2–Trp-31 and Ile-39–Tyr-68. The [4Fe-4S] cluster site is built by Cys-11, Cys-14, Cys-17, Cys-21, Cys-48, Cys-51, Cys-54, and Cys-58.

As to quaternary structure, the eukaryotic PSI reaction center is composed of at least 11 subunits. The cofactor is [4Fe-4S] cluster.

It is found in the plastid. It localises to the chloroplast thylakoid membrane. The catalysed reaction is reduced [plastocyanin] + hnu + oxidized [2Fe-2S]-[ferredoxin] = oxidized [plastocyanin] + reduced [2Fe-2S]-[ferredoxin]. Functionally, apoprotein for the two 4Fe-4S centers FA and FB of photosystem I (PSI); essential for photochemical activity. FB is the terminal electron acceptor of PSI, donating electrons to ferredoxin. The C-terminus interacts with PsaA/B/D and helps assemble the protein into the PSI complex. Required for binding of PsaD and PsaE to PSI. PSI is a plastocyanin-ferredoxin oxidoreductase, converting photonic excitation into a charge separation, which transfers an electron from the donor P700 chlorophyll pair to the spectroscopically characterized acceptors A0, A1, FX, FA and FB in turn. This Sorghum bicolor (Sorghum) protein is Photosystem I iron-sulfur center.